The sequence spans 267 residues: MADS-box transcription factor 15 (267 aa).

The region spanning 1 to 61 (MGRGKVQLKR…GKLYEYATDS (61 aa)) is the MADS-box domain. Residues 88–178 (EGNWCHEYRK…QKELVERQKN (91 aa)) enclose the K-box domain. The segment at 179–215 (VRGQQQVGQWDQTQVQAQAQAQPQAQTSSSSSSMLRD) is disordered. Over residues 182-215 (QQQVGQWDQTQVQAQAQAQPQAQTSSSSSSMLRD) the composition is skewed to low complexity.

In terms of assembly, may interact with the K-box of MADS1 and MADS6.

It is found in the nucleus. Its function is as follows. Probable transcription factor. This is MADS-box transcription factor 15 (MADS15) from Oryza sativa subsp. japonica (Rice).